A 111-amino-acid chain; its full sequence is UPF0060 membrane protein XCC2880 (111 aa).

Transmembrane regions (helical) follow at residues 8-28, 34-54, 62-82, and 91-111; these read LLLF…PYLW, SVWL…LLTL, VYAA…WWVD, and LLGA…PRSG.

Belongs to the UPF0060 family.

It is found in the cell inner membrane. In Xanthomonas campestris pv. campestris (strain ATCC 33913 / DSM 3586 / NCPPB 528 / LMG 568 / P 25), this protein is UPF0060 membrane protein XCC2880.